Reading from the N-terminus, the 249-residue chain is Proteasome subunit alpha type-7-1 (249 aa).

Ser-177 carries the phosphoserine modification.

The protein belongs to the peptidase T1A family. In terms of assembly, the 26S proteasome consists of a 20S proteasome core and two 19S regulatory subunits. The 20S proteasome core is composed of 28 subunits that are arranged in four stacked rings, resulting in a barrel-shaped structure. The two end rings are each formed by seven alpha subunits, and the two central rings are each formed by seven beta subunits. The catalytic chamber with the active sites is on the inside of the barrel. Interacts with PI31; this interaction is reduced by PI31 ADP-ribosylation.

The protein resides in the cytoplasm. Its subcellular location is the nucleus. The proteasome is a multicatalytic proteinase complex which is characterized by its ability to cleave peptides with Arg, Phe, Tyr, Leu, and Glu adjacent to the leaving group at neutral or slightly basic pH. The proteasome has an ATP-dependent proteolytic activity. This chain is Proteasome subunit alpha type-7-1 (Prosalpha4), found in Drosophila melanogaster (Fruit fly).